Here is a 395-residue protein sequence, read N- to C-terminus: Proteinase-activated receptor 2 (395 aa).

A signal peptide spans 1–25 (MRSPSAAWLLGGVLLLAASGSCNRT). 2 N-linked (GlcNAc...) asparagine glycosylation sites follow: asparagine 23 and asparagine 29. The propeptide at 26–34 (VPGNKSKGR) is removed for receptor activation. Residues 35 to 69 (SLIGNVDNSPVVAGRGVTVKPGFSVDEFSTSVLTG) lie on the Extracellular side of the membrane. A helical transmembrane segment spans residues 70 to 99 (KLTTVFLPVVYTIVFVVGLPSNGMALWVFL). Over 100–106 (FRTKKKH) the chain is Cytoplasmic. The chain crosses the membrane as a helical span at residues 107–135 (PAVIYMANLALADLLSVTWFPLKIAYHIH). Over 136 to 147 (GNNWIYGESLCK) the chain is Extracellular. Cysteines 146 and 224 form a disulfide. A helical transmembrane segment spans residues 148–175 (VLIGFFYGNMYCSILFMTCLSVQRYWVI). Topologically, residues 176–181 (VNPMVH) are cytoplasmic. A helical membrane pass occupies residues 182–209 (PKKQANIAIGVSLGIWLLILLLTIPLYV). Residues 210–233 (VKQTSYIRALNITTCHDVLPEEVL) lie on the Extracellular side of the membrane. Asparagine 220 is a glycosylation site (N-linked (GlcNAc...) asparagine). The chain crosses the membrane as a helical span at residues 234–267 (VGDMFNYFLSLAIGVFLFPAFLTASAYVLMIRTL). Over 268–275 (QSSAMDES) the chain is Cytoplasmic. A helical transmembrane segment spans residues 276-315 (SGKKRRRAIKLIVTVLAMYLICFTPSNLLLVVHYFLIKTR). Topologically, residues 316–321 (GQSHVY) are extracellular. Residues 322-345 (ALYIVALCLSTLNSCIDPFVYYFI) form a helical membrane-spanning segment. Topologically, residues 346–395 (SQDFRDHAKNALLCRSVRTVKRMQVSLSSKKFSGKSSSYSSSSTSVKGSY) are cytoplasmic. A lipid anchor (S-palmitoyl cysteine) is attached at cysteine 359.

Belongs to the G-protein coupled receptor 1 family. Interacts with TLR4, COPS5 and TMED2. Interacts with GNAQ, GNA11, GNA12, GNA13 and GNA14. A proteolytic cleavage generates a new N-terminus that functions as a tethered ligand. Activating serine proteases include trypsin, mast cell tryptase, coagulation factors VII and Xa, myeloblastin/PRTN3 and membrane-type serine protease 1/ST14. Proposed subsequent cleavage by serine proteases is leading to receptor deactivation and include neutrophil elastase and cathepsin G. At least in part, implicated proteases are also shown to activate the receptor; the glycosylation status of the receptor is thought to contribute to the difference. In terms of processing, N-glycosylated and sialylated. Post-translationally, multiple phosphorylated on serine and threonine residues in the cytoplasmic region upon receptor activation; required for receptor desensitization and recruitment of beta-arrestin. Monoubiquitinated by CBL at the plasma membrane and in early endosomes; not required for receptor endocytosis but for translocation to late endosomes or lysosomes. Deubiquitination involves STAMBP and USP8; required for lysosomal trafficking and receptor degradation.

The protein localises to the cell membrane. In terms of biological role, receptor for trypsin and trypsin-like enzymes coupled to G proteins. Its function is mediated through the activation of several signaling pathways including phospholipase C (PLC), intracellular calcium, mitogen-activated protein kinase (MAPK), I-kappaB kinase/NF-kappaB and Rho. Can also be transactivated by cleaved F2R/PAR1. Involved in modulation of inflammatory responses and regulation of innate and adaptive immunity, and acts as a sensor for proteolytic enzymes generated during infection. Generally is promoting inflammation. Can signal synergistically with TLR4 and probably TLR2 in inflammatory responses and modulates TLR3 signaling. Has a protective role in establishing the endothelial barrier; the activity involves coagulation factor X. Regulates endothelial cell barrier integrity during neutrophil extravasation, probably following proteolytic cleavage by PRTN3. Proposed to have a bronchoprotective role in airway epithelium, but also shown to compromise the airway epithelial barrier by interrupting E-cadherin adhesion. Involved in the regulation of vascular tone; activation results in hypotension presumably mediated by vasodilation. Associates with a subset of G proteins alpha subunits such as GNAQ, GNA11, GNA14, GNA12 and GNA13, but probably not with G(o) alpha, G(i) subunit alpha-1 and G(i) subunit alpha-2. Believed to be a class B receptor which internalizes as a complex with arrestin and traffic with it to endosomal vesicles, presumably as desensitized receptor, for extended periods of time. Mediates inhibition of TNF-alpha stimulated JNK phosphorylation via coupling to GNAQ and GNA11; the function involves dissociation of RIPK1 and TRADD from TNFR1. Mediates phosphorylation of nuclear factor NF-kappa-B RELA subunit at 'Ser-536'; the function involves IKBKB and is predominantly independent of G proteins. Involved in cellular migration. Involved in cytoskeletal rearrangement and chemotaxis through beta-arrestin-promoted scaffolds; the function is independent of GNAQ and GNA11 and involves promotion of cofilin dephosphorylation and actin filament severing. Induces redistribution of COPS5 from the plasma membrane to the cytosol and activation of the JNK cascade is mediated by COPS5. Involved in the recruitment of leukocytes to the sites of inflammation and is the major PAR receptor capable of modulating eosinophil function such as pro-inflammatory cytokine secretion, superoxide production and degranulation. During inflammation promotes dendritic cell maturation, trafficking to the lymph nodes and subsequent T-cell activation. Involved in antimicrobial response of innate immune cells; activation enhances phagocytosis of Gram-positive and killing of Gram-negative bacteria. Acts synergistically with interferon-gamma in enhancing antiviral responses. Probably mediates activation of pro-inflammatory and pro-fibrotic responses in fibroblasts, triggered by coagulation factor Xa (F10). Probably mediates activation of barrier protective signaling responses in endothelial cells, triggered by coagulation factor Xa (F10). The polypeptide is Proteinase-activated receptor 2 (F2RL1) (Bos taurus (Bovine)).